The following is a 373-amino-acid chain: mRNA export factor rae-1 (373 aa).

Methionine 1 carries the post-translational modification N-acetylmethionine. 4 WD repeats span residues 40–82 (APED…TFEG), 87–126 (NIPA…VAVV), 128–169 (THDG…NQTQ), and 276–315 (QEIY…KLKT).

It belongs to the WD repeat rae1 family. As to quaternary structure, the nuclear pore complex (NPC) constitutes the exclusive means of nucleocytoplasmic transport. NPCs allow the passive diffusion of ions and small molecules and the active, nuclear transport receptor-mediated bidirectional transport of macromolecules such as proteins, RNAs, ribonucleoparticles (RNPs), and ribosomal subunits across the nuclear envelope. Interacts with rpm-1. As to expression, expressed along the ventral and dorsal nerve cords.

The protein resides in the nucleus. It localises to the nuclear pore complex. It is found in the cell projection. Its subcellular location is the axon. The protein localises to the synapse. In terms of biological role, functions as a component of the nuclear pore complex (NPC). NPC components, collectively referred to as nucleoporins (NUPs), can play the role of both NPC structural components and of docking or interaction partners for transiently associated nuclear transport factors. It is specifically important for nuclear mRNA export. Has a role in neuronal development, where it acts downstream of rpm-1 to control axon termination and synapse formation in anterior lateral microtubule (ALM) and posterior lateral microtubule (PLM) mechanosensory neurons. In Caenorhabditis elegans, this protein is mRNA export factor rae-1.